The primary structure comprises 232 residues: MKVEEREYIKKYWVGLMDGVGSIEVNHYRMKNLQYRLVLNVNDSSENMAMLLKIQQVIGGYLIKRKEKALIAWTINNKMQIEDVIKIFEDYNLVTVRKRNQLQFLKENLKRNDVNWYLSERKNKYKKSLIVSNIEEISYFNEWFSGFVEATGSFCIRAQKEKYFRIAHRYDMPLLLNLIIKFNITTKLREQKNEQYAIEIYKKTLLEVLITHFEKYPLLGDKKNSLETFKTR.

It belongs to the LAGLIDADG endonuclease family.

Its subcellular location is the mitochondrion. Mitochondrial DNA endonuclease involved in intron homing. The sequence is that of Probable intron-encoded endonuclease aI3 (aI3) from Dictyostelium discoideum (Social amoeba).